Reading from the N-terminus, the 298-residue chain is Probable 3-mercaptopyruvate sulfurtransferase (298 aa).

Residues 24–141 (NAQKTVLLDA…WKTEGLELET (118 aa)) form the Rhodanese 1 domain. The tract at residues 142–175 (GEPRTPKPVVYEGAKLNKDLVASFDDIVKVIESP) is hinge. Ser-164 carries the phosphoserine modification. In terms of domain architecture, Rhodanese 2 spans 176-292 (DAAGVHIVDA…YGKRANEDSS (117 aa)). Residue Arg-190 coordinates substrate. The active-site Cysteine persulfide intermediate is the Cys-252.

It localises to the mitochondrion. It carries out the reaction 2-oxo-3-sulfanylpropanoate + [thioredoxin]-dithiol = [thioredoxin]-disulfide + hydrogen sulfide + pyruvate + H(+). In terms of biological role, required for formation of the 2-thio group of the 5-methoxycarbonylmethyl-2-thiouridine modified base in some tRNAs. The polypeptide is Probable 3-mercaptopyruvate sulfurtransferase (tum1) (Schizosaccharomyces pombe (strain 972 / ATCC 24843) (Fission yeast)).